The sequence spans 113 residues: Ig kappa chain V-II region MOPC 511 (113 aa).

Residues 1-23 (DIVITQDELSKPVTSGESVSISC) are framework-1. C23 and C93 are oxidised to a cystine. The tract at residues 24 to 39 (RSSKSLLYKDGKTYLN) is complementarity-determining-1. The segment at 40–54 (WFLQGPQQSPRLLIY) is framework-2. The interval 55–61 (LMSTRAS) is complementarity-determining-2. The segment at 62–93 (GVSDRFSGSGSGTDFTLEISRVKAEDVGVYYC) is framework-3. Positions 94–102 (QQLVEYPLT) are complementarity-determining-3. Residues 103–112 (FGAGTKLELK) form a framework-4 region.

The sequence is that of Ig kappa chain V-II region MOPC 511 from Mus musculus (Mouse).